A 165-amino-acid chain; its full sequence is MNPESVRIYLVAAMGANRVIGNGPDIPWKIPGEQKIFRRLTESKVVVMGRKTFESIGKPLPNRHTVVLSRQAGYSAPGCAVVSTLSHVSPSTAEHGKELYVARGAEVYALALPHANGVFLSEVHQTFEGDAFFPVLNAAEFEVVSSETIQGTITYTHSVYARRNG.

The DHFR domain occupies 7–162 (RIYLVAAMGA…ITYTHSVYAR (156 aa)).

It belongs to the dihydrofolate reductase family. Homodimer.

The catalysed reaction is (6S)-5,6,7,8-tetrahydrofolate + NADP(+) = 7,8-dihydrofolate + NADPH + H(+). The protein operates within cofactor biosynthesis; tetrahydrofolate biosynthesis; 5,6,7,8-tetrahydrofolate from 7,8-dihydrofolate: step 1/1. Functionally, key enzyme in folate metabolism. Catalyzes an essential reaction for de novo glycine and purine synthesis, and for DNA precursor synthesis. In Escherichia coli, this protein is Dihydrofolate reductase type A13 (dfrA13).